Consider the following 193-residue polypeptide: PBAN-type neuropeptides (193 aa).

The first 19 residues, 1 to 19 (MYGAVLPGLFFIFISCVVA), serve as a signal peptide directing secretion. Residue isoleucine 46 is modified to Isoleucine amide. Residues leucine 102 and leucine 122 each carry the leucine amide modification. The interval 124 to 158 (RRLADDTPATPADQEMYRPDPEQIDSRTKYFSPRL) is disordered. Residues 138–151 (EMYRPDPEQIDSRT) show a composition bias toward basic and acidic residues. Residues leucine 158 and leucine 168 each carry the leucine amide modification. The propeptide occupies 186-193 (STNKTQST).

The protein belongs to the pyrokinin family. As to expression, expressed in the mandibular, maxillary and labial neuromeres of the male and female brain-subesophageal ganglions, in the corpora cardiaca and all around the corpora allata, and at a lower level in the brain near the calyx and pedunculus of the mushroom body (at protein level). Expressed in larvae and adult of both sexes (at protein level). In terms of tissue distribution, expressed in corpora cardiaca (CC), corpora allata (CA) and gnathal ganglion (GNG) (at protein level). Expression in CC and CA detected in most animals, in GNG in some (at protein level). Expression not detected in CC, CA, AL or GNG (at protein level). As to expression, expressed in corpora cardiaca (CC), corpora allata (CA), antennal lobe (AL) and gnathal ganglion (GNG) (at protein level). Expression in CC, CA and GNG detected in most animals, expression in AL detected in few (at protein level). In terms of tissue distribution, expressed in corpora cardiaca (CC), corpora allata (CA), antennal lobe (AL) and gnathal ganglion (GNG) (at protein level). Expression in CC, CA and GNG detected in all animals, expression in AL detected in some (at protein level). Expressed in corpora cardiaca (CC), corpora allata (CA), antennal lobe (AL) and gnathal ganglion (GNG) (at protein level). Expression in CC, CA and GNG detected in most animals, expression in AL detected in some animals (at protein level).

The protein localises to the secreted. Its function is as follows. A hormone that controls sex pheromone production in female moths and pheromone responsiveness in male. This is PBAN-type neuropeptides from Agrotis ipsilon (Black cutworm moth).